A 348-amino-acid polypeptide reads, in one-letter code: Protein lifeguard 1 (348 aa).

The interval 1–118 (MSHEKSFLVS…GNYQEEGPPS (118 aa)) is disordered. Pro residues predominate over residues 14-41 (YPPPNPGYPVGPQAPMPPYVQPPYPGAP). A compositionally biased stretch (low complexity) spans 42-57 (YPQAAFQPSPYGQPGY). The segment covering 82–101 (GPYPQSPFPPNPYGQPPPFQ) has biased composition (pro residues). 7 consecutive transmembrane segments (helical) span residues 142–162 (VFLV…IFTF), 174–194 (VWTY…LSCC), 205–225 (LVAL…IASF), 230–250 (AVIM…IFSM), 260–280 (MGVL…CIFI), 284–304 (ILEI…LAVD), and 323–343 (FAAL…LTII).

Belongs to the BI1 family. LFG subfamily.

It is found in the membrane. Potential apoptotic regulator. The sequence is that of Protein lifeguard 1 (Grina) from Rattus norvegicus (Rat).